Here is a 558-residue protein sequence, read N- to C-terminus: Putative transport protein VC0395_A0715/VC395_1212 (558 aa).

5 consecutive transmembrane segments (helical) span residues 5–25, 37–57, 66–86, 92–112, and 164–184; these read VVLL…AIGL, LGNS…GFSF, FMLF…GIFF, YLIL…FGGY, and VGYA…AKLL. RCK C-terminal domains follow at residues 203 to 290 and 291 to 374; these read RGLG…FRNG and KEVF…KIGF. 6 helical membrane-spanning segments follow: residues 384-404, 407-427, 441-461, 476-496, 504-524, and 537-557; these read LLAF…TMTF, VSFS…LGFL, ALNM…GLNA, VIGL…LVGA, ALLF…DVVN, and AGTY…FILL.

The protein belongs to the AAE transporter (TC 2.A.81) family. YbjL subfamily.

It localises to the cell membrane. The sequence is that of Putative transport protein VC0395_A0715/VC395_1212 from Vibrio cholerae serotype O1 (strain ATCC 39541 / Classical Ogawa 395 / O395).